We begin with the raw amino-acid sequence, 402 residues long: Multidrug resistance protein MdtH (402 aa).

A run of 11 helical transmembrane segments spans residues Y13–I33, S34–L54, P99–F116, L139–L159, L165–L185, V214–M234, A243–I263, L277–V297, L300–T320, L340–G360, and L368–F388.

Belongs to the major facilitator superfamily. DHA1 family. MdtH (TC 2.A.1.2.21) subfamily.

The protein resides in the cell inner membrane. The chain is Multidrug resistance protein MdtH from Enterobacter sp. (strain 638).